We begin with the raw amino-acid sequence, 295 residues long: Zinc finger transcription factor pqm-1 (295 aa).

Residues 1-23 are disordered; that stretch reads MSFLNNDFGSPPATSSPPTTMPK. Residues 10 to 22 show a composition bias toward low complexity; that stretch reads SPPATSSPPTTMP. A C2H2-type 1; degenerate zinc finger spans residues 161–183; that stretch reads YMCTVCRKVYGRYNSVSYHVTIY. The C2H2-type 2 zinc-finger motif lies at 227–249; it reads RKCPHCRHVSKSPAMLEKHIRRH.

The protein belongs to the krueppel C2H2-type zinc-finger protein family. Interacts with ceh-60.

It localises to the chromosome. The protein resides in the nucleus. It is found in the cytoplasm. Zinc finger transcription factor which acts as both a transcriptional activator and repressor. Binds to the promoters of genes that contain the 5'-CTTATCA-3' DNA consensus sequence in their regulatory region. Functions downstream of the Insulin/IGF-1-like signaling (IIS) mediated pathway. Involved in normal development, lifespan, stress response, lipid metabolism, innate immunity and exit from the developmentally arrested larval state known as dauer. Required for stress-induced expression of hsp-90 and resistance to heat stress, perhaps as part of a systemic stress signaling pathway. Involved in maintenance of proteostasis. Under hypoxic stress increases lipid levels by positively regulating fatty acid synthesis via fat-7 expression. Associates with homeobox protein ceh-60 at the promoters of some stress-responsive genes to regulate expression; may require phosphorylation for transcriptional repression activity. Acts downstream of nhr-14 to activate transcription of intestinal metal transporter smf-3, modulating innate immunity and iron uptake. May act downstream of the mTORC2 signaling mediated pathway. May act in a mutually exclusive manner with the FOXO transcription factor daf-16. The protein is Zinc finger transcription factor pqm-1 of Caenorhabditis elegans.